Here is a 1040-residue protein sequence, read N- to C-terminus: DNA mismatch repair protein MutS (1040 aa).

Over residues 1-10 (MPVKPSAQNN) the composition is skewed to polar residues. Disordered stretches follow at residues 1–22 (MPVK…SVPV) and 130–157 (ATGT…SKST). Over residues 11 to 22 (SPSKPTSKSVPV) the composition is skewed to low complexity. Residues 130–143 (ATGTDNANNPSNAP) show a composition bias toward polar residues. 759 to 766 (GPNMGGKS) is a binding site for ATP.

Belongs to the DNA mismatch repair MutS family.

In terms of biological role, this protein is involved in the repair of mismatches in DNA. It is possible that it carries out the mismatch recognition step. This protein has a weak ATPase activity. The protein is DNA mismatch repair protein MutS of Psychrobacter cryohalolentis (strain ATCC BAA-1226 / DSM 17306 / VKM B-2378 / K5).